A 579-amino-acid chain; its full sequence is Laccase (579 aa).

Residues 1–31 (MTDWSRRRFLQTGAALGIAGTLPQTTTEVSA) constitute a signal peptide (tat-type signal). Residues 82-214 (WGFDGSYPGP…AGLLGLYSIT (133 aa)) form the Plastocyanin-like 1 domain. Cu cation is bound by residues His145, His147, His192, and His194. The disordered stretch occupies residues 372–401 (VSDPSTPPEDASADPTSLSLPTPASYDESD). The Plastocyanin-like 2 domain maps to 423–530 (LNGHVFGDED…NKMMIPFVVE (108 aa)). The N-linked (GlcNAc...) asparagine glycan is linked to Asn449. Cu cation is bound by residues His455, His458, His460, His512, Cys513, His514, His518, and Met523. Asn557 carries an N-linked (GlcNAc...) asparagine glycan.

This sequence belongs to the multicopper oxidase family. Requires Cu(2+) as cofactor. Post-translationally, exported by the Tat system. Glycosylated.

Its subcellular location is the secreted. It catalyses the reaction 4 hydroquinone + O2 = 4 benzosemiquinone + 2 H2O. With respect to regulation, inhibited by 1 mM NaN(3), 10 mM thiourea, 10 mM 1,10-phenanthroline, 0.1 mM DL-dithiothreitol (DTT) and 1 mM L-cysteine. The inhibition by DTT and L-cysteine is likely caused by reduction of the oxidized substrate and not by inhibition of the enzyme. Its function is as follows. Catalyzes the oxidation of a wide variety of organic substrates, including bilirubin, syringaldazine (SGZ), 2,2'-azino-di-(3-ethylbenzothiazoline)-6-sulfonic acid (ABTS) and dimethoxyphenol (DMP). No oxidation of Fe(2+) or guaiacol. The protein is Laccase (lccA) of Haloferax volcanii (strain ATCC 29605 / DSM 3757 / JCM 8879 / NBRC 14742 / NCIMB 2012 / VKM B-1768 / DS2) (Halobacterium volcanii).